Reading from the N-terminus, the 238-residue chain is Adenylate dimethylallyltransferase (238 aa).

Belongs to the isopentenyl transferase family.

The enzyme catalyses dimethylallyl diphosphate + AMP = N(6)-(dimethylallyl)adenosine 5'-phosphate + diphosphate. Functionally, transfers dimethylallyl groups to AMP as part of the biosynthesis of cytokinin phytohormones. The polypeptide is Adenylate dimethylallyltransferase (tzs) (Ralstonia nicotianae (strain ATCC BAA-1114 / GMI1000) (Ralstonia solanacearum)).